A 255-amino-acid chain; its full sequence is MAFSLCWKAPRSQWSFLQALNSGFPLFPWRTVGSCLDLKMKAYLEENTEVTSSGSLTPEIQLRLLTPRCKFWWERADLWPYSDPYWAIYWPGGQALSRYLLDNPDVVRGKSVLDLGSGCGATAIAAKMSGASNILANDVDPIAGMAITLNCKLNGLNPFPILTKNILNTRQGKFDLIVLGDMFYDEDLADSLHLWLQNCFWAYGTRVLIGDPGRPQFSGHSIQHQLYQLAEYTLPEPTQQDNNGLTTSAVWDFHP.

The N-terminal 32 residues, 1 to 32, are a transit peptide targeting the mitochondrion; that stretch reads MAFSLCWKAPRSQWSFLQALNSGFPLFPWRTV.

The protein belongs to the methyltransferase superfamily. ETFBKMT family. As to quaternary structure, interacts with HSPD1; this protein may possibly be a methylation substrate.

The protein resides in the cytoplasm. It localises to the mitochondrion matrix. It carries out the reaction L-lysyl-[protein] + 3 S-adenosyl-L-methionine = N(6),N(6),N(6)-trimethyl-L-lysyl-[protein] + 3 S-adenosyl-L-homocysteine + 3 H(+). In terms of biological role, protein-lysine methyltransferase that selectively trimethylates the flavoprotein ETFB in mitochondria. Thereby, may negatively regulate the function of ETFB in electron transfer from Acyl-CoA dehydrogenases to the main respiratory chain. The chain is Electron transfer flavoprotein beta subunit lysine methyltransferase from Rattus norvegicus (Rat).